The chain runs to 165 residues: MAVKIKLQRLGKIRTPHYRVVIADARTKRDGKVIENIGIYEPKAEPSVIKINSERAQHWLSVGAQPTEAVAALLKVTGDWQKFKGIEGAEGTLRVAEPKPSKLELFNQALSEANNGPTAEAITEKKKKAREDKEAKEAAEKAAAEKAAAAESEEAPAEEAAAEEA.

Positions 110 to 165 (LSEANNGPTAEAITEKKKKAREDKEAKEAAEKAAAEKAAAAESEEAPAEEAAAEEA) are disordered. Residues 129–144 (AREDKEAKEAAEKAAA) show a composition bias toward basic and acidic residues. Residues 151–165 (ESEEAPAEEAAAEEA) show a composition bias toward acidic residues.

Belongs to the bacterial ribosomal protein bS16 family.

This chain is Small ribosomal subunit protein bS16, found in Corynebacterium glutamicum (strain R).